The sequence spans 167 residues: Leptin (167 aa).

Positions 1-21 are cleaved as a signal peptide; it reads MRCGPLYRFLWLWPYLSYVEA. A disulfide bridge connects residues Cys-117 and Cys-167.

Belongs to the leptin family.

It is found in the secreted. Key player in the regulation of energy balance and body weight control. Once released into the circulation, has central and peripheral effects by binding LEPR, found in many tissues, which results in the activation of several major signaling pathways. In the hypothalamus, acts as an appetite-regulating factor that induces a decrease in food intake and an increase in energy consumption by inducing anorexinogenic factors and suppressing orexigenic neuropeptides, also regulates bone mass and secretion of hypothalamo-pituitary-adrenal hormones. In the periphery, increases basal metabolism, influences reproductive function, regulates pancreatic beta-cell function and insulin secretion, is pro-angiogenic for endothelial cell and affects innate and adaptive immunity. In the arcuate nucleus of the hypothalamus, activates by depolarization POMC neurons inducing FOS and SOCS3 expression to release anorexigenic peptides and inhibits by hyperpolarization NPY neurons inducing SOCS3 with a consequent reduction on release of orexigenic peptides. In addition to its known satiety inducing effect, has a modulatory role in nutrient absorption. In the intestine, reduces glucose absorption by enterocytes by activating PKC and leading to a sequential activation of p38, PI3K and ERK signaling pathways which exerts an inhibitory effect on glucose absorption. Acts as a growth factor on certain tissues, through the activation of different signaling pathways increases expression of genes involved in cell cycle regulation such as CCND1, via JAK2-STAT3 pathway, or VEGFA, via MAPK1/3 and PI3K-AKT1 pathways. May also play an apoptotic role via JAK2-STAT3 pathway and up-regulation of BIRC5 expression. Pro-angiogenic, has mitogenic activity on vascular endothelial cells and plays a role in matrix remodeling by regulating the expression of matrix metalloproteinases (MMPs) and tissue inhibitors of metalloproteinases (TIMPs). In innate immunity, modulates the activity and function of neutrophils by increasing chemotaxis and the secretion of oxygen radicals. Increases phagocytosis by macrophages and enhances secretion of pro-inflammatory mediators. Increases cytotoxic ability of NK cells. Plays a pro-inflammatory role, in synergy with IL1B, by inducing NOS2 which promotes the production of IL6, IL8 and Prostaglandin E2, through a signaling pathway that involves JAK2, PI3K, MAP2K1/MEK1 and MAPK14/p38. In adaptive immunity, promotes the switch of memory T-cells towards T helper-1 cell immune responses. Increases CD4(+)CD25(-) T-cell proliferation and reduces autophagy during TCR (T-cell receptor) stimulation, through MTOR signaling pathway activation and BCL2 up-regulation. This Capra hircus (Goat) protein is Leptin (LEP).